Here is a 475-residue protein sequence, read N- to C-terminus: Ribulose bisphosphate carboxylase large chain (475 aa).

Residues M1 to S2 constitute a propeptide that is removed on maturation. Position 3 is an N-acetylproline (P3). K14 carries the post-translational modification N6,N6,N6-trimethyllysine. The substrate site is built by N123 and T173. K175 functions as the Proton acceptor in the catalytic mechanism. K177 serves as a coordination point for substrate. 3 residues coordinate Mg(2+): K201, D203, and E204. Residue K201 is modified to N6-carboxylysine. The active-site Proton acceptor is the H294. Substrate is bound by residues R295, H327, and S379.

It belongs to the RuBisCO large chain family. Type I subfamily. In terms of assembly, heterohexadecamer of 8 large chains and 8 small chains; disulfide-linked. The disulfide link is formed within the large subunit homodimers. Requires Mg(2+) as cofactor. The disulfide bond which can form in the large chain dimeric partners within the hexadecamer appears to be associated with oxidative stress and protein turnover.

It localises to the plastid. The protein resides in the chloroplast. The catalysed reaction is 2 (2R)-3-phosphoglycerate + 2 H(+) = D-ribulose 1,5-bisphosphate + CO2 + H2O. It catalyses the reaction D-ribulose 1,5-bisphosphate + O2 = 2-phosphoglycolate + (2R)-3-phosphoglycerate + 2 H(+). RuBisCO catalyzes two reactions: the carboxylation of D-ribulose 1,5-bisphosphate, the primary event in carbon dioxide fixation, as well as the oxidative fragmentation of the pentose substrate in the photorespiration process. Both reactions occur simultaneously and in competition at the same active site. This chain is Ribulose bisphosphate carboxylase large chain, found in Eucalyptus globulus subsp. globulus (Tasmanian blue gum).